The sequence spans 173 residues: Adenine phosphoribosyltransferase (173 aa).

Belongs to the purine/pyrimidine phosphoribosyltransferase family. In terms of assembly, homodimer.

Its subcellular location is the cytoplasm. It carries out the reaction AMP + diphosphate = 5-phospho-alpha-D-ribose 1-diphosphate + adenine. It functions in the pathway purine metabolism; AMP biosynthesis via salvage pathway; AMP from adenine: step 1/1. In terms of biological role, catalyzes a salvage reaction resulting in the formation of AMP, that is energically less costly than de novo synthesis. The polypeptide is Adenine phosphoribosyltransferase (Ureaplasma parvum serovar 3 (strain ATCC 27815 / 27 / NCTC 11736)).